The chain runs to 242 residues: Uridylate kinase (242 aa).

11-14 (KLSG) is an ATP binding site. The involved in allosteric activation by GTP stretch occupies residues 19 to 24 (GDKGVG). Gly-53 lines the UMP pocket. ATP contacts are provided by Gly-54 and Arg-58. UMP contacts are provided by residues Asp-73 and 134–141 (IGSPYFST). The ATP site is built by Asn-162, Tyr-168, and Asp-171.

This sequence belongs to the UMP kinase family. Homohexamer.

It localises to the cytoplasm. The enzyme catalyses UMP + ATP = UDP + ADP. The protein operates within pyrimidine metabolism; CTP biosynthesis via de novo pathway; UDP from UMP (UMPK route): step 1/1. Allosterically activated by GTP. Inhibited by UTP. Functionally, catalyzes the reversible phosphorylation of UMP to UDP. In Streptococcus agalactiae serotype Ia (strain ATCC 27591 / A909 / CDC SS700), this protein is Uridylate kinase.